The sequence spans 261 residues: Peroxiredoxin PRX1, mitochondrial (261 aa).

The N-terminal 13 residues, 1 to 13, are a transit peptide targeting the mitochondrion; the sequence is MFSRICSAQLKRT. The Thioredoxin domain occupies 49–212; sequence LRINSDAPNF…VLRVIDALQL (164 aa). Position 53 is a phosphoserine (S53). C91 serves as the catalytic Cysteine sulfenic acid (-SOH) intermediate.

The protein belongs to the peroxiredoxin family. Prx6 subfamily. In terms of assembly, homodimer; disulfide-linked.

It localises to the mitochondrion. The enzyme catalyses a hydroperoxide + 2 glutathione = an alcohol + glutathione disulfide + H2O. It carries out the reaction [glutaredoxin]-dithiol + a hydroperoxide = [glutaredoxin]-disulfide + an alcohol + H2O. In terms of biological role, thiol-specific peroxidase that catalyzes the reduction of hydrogen peroxide and organic hydroperoxides to water and alcohols, respectively. Plays a role in cell protection against oxidative stress by detoxifying peroxides and as sensor of hydrogen peroxide-mediated signaling events. Involved in mitochondrial protection of cadmium-induced oxidative stress. The chain is Peroxiredoxin PRX1, mitochondrial from Saccharomyces cerevisiae (strain ATCC 204508 / S288c) (Baker's yeast).